The following is a 448-amino-acid chain: Methylenetetrahydrofolate--tRNA-(uracil-5-)-methyltransferase TrmFO (448 aa).

13-18 provides a ligand contact to FAD; that stretch reads GAGLAG.

The protein belongs to the MnmG family. TrmFO subfamily. The cofactor is FAD.

It localises to the cytoplasm. It catalyses the reaction uridine(54) in tRNA + (6R)-5,10-methylene-5,6,7,8-tetrahydrofolate + NADH + H(+) = 5-methyluridine(54) in tRNA + (6S)-5,6,7,8-tetrahydrofolate + NAD(+). The catalysed reaction is uridine(54) in tRNA + (6R)-5,10-methylene-5,6,7,8-tetrahydrofolate + NADPH + H(+) = 5-methyluridine(54) in tRNA + (6S)-5,6,7,8-tetrahydrofolate + NADP(+). Catalyzes the folate-dependent formation of 5-methyl-uridine at position 54 (M-5-U54) in all tRNAs. The chain is Methylenetetrahydrofolate--tRNA-(uracil-5-)-methyltransferase TrmFO from Streptococcus pyogenes serotype M4 (strain MGAS10750).